We begin with the raw amino-acid sequence, 214 residues long: Riboflavin kinase (214 aa).

The tract at residues 1–91 is H-T-H motif-like; the sequence is MRSIMEVETL…YCSIFEDGGA (91 aa). The interval 92–214 is riboflavin kinase; the sequence is PVMRGKVVTG…DGDEVEVTLE (123 aa). 101-106 contacts CDP; sequence GLGEGQ. Residues Thr-130 and Asn-132 each contribute to the Mg(2+) site. FMN-binding residues include Thr-182 and Glu-190. Residue 195–198 coordinates CDP; sequence IKLR.

This sequence belongs to the archaeal riboflavin kinase family. Mg(2+) is required as a cofactor.

It carries out the reaction riboflavin + CTP = CDP + FMN + H(+). The protein operates within cofactor biosynthesis; FMN biosynthesis; FMN from riboflavin (CTP route): step 1/1. Functionally, catalyzes the CTP-dependent phosphorylation of riboflavin (vitamin B2) to form flavin mononucleotide (FMN). The chain is Riboflavin kinase (ribK) from Methanocella arvoryzae (strain DSM 22066 / NBRC 105507 / MRE50).